Here is a 298-residue protein sequence, read N- to C-terminus: U1 small nuclear ribonucleoprotein A (298 aa).

2 consecutive RRM domains span residues 2–113 and 227–298; these read SALY…KART and KVLL…GFAK.

The protein belongs to the RRM U1 A/B'' family. As to quaternary structure, component of the spliceosome where it is associated with snRNP U1.

The protein localises to the nucleus. Its function is as follows. Involved in nuclear mRNA splicing. The principal role of the U1A is to help fold or maintain U1 RNA in an active configuration. It is the first snRNP to interact with pre-mRNA. This interaction is required for the subsequent binding of U2 snRNP and the U4/U6/U5 tri-snRNP. This is U1 small nuclear ribonucleoprotein A (MUD1) from Saccharomyces cerevisiae (strain ATCC 204508 / S288c) (Baker's yeast).